We begin with the raw amino-acid sequence, 304 residues long: Acetaldehyde dehydrogenase 4 (304 aa).

The Acyl-thioester intermediate role is filled by Cys131. NAD(+)-binding positions include 162 to 170 (SAGPGTRKN) and Asn273.

The protein belongs to the acetaldehyde dehydrogenase family.

The enzyme catalyses acetaldehyde + NAD(+) + CoA = acetyl-CoA + NADH + H(+). This is Acetaldehyde dehydrogenase 4 from Dechloromonas aromatica (strain RCB).